We begin with the raw amino-acid sequence, 360 residues long: MHLTRLNIERVRNLKTVALHGLQPFNVFYGANGSGKTSILEAIHLLATGRSFRTHIPKNYIQYEADDAIVFAQSATEKIGMQKLASGEQLMKVNGDTVATQGQLAKLLPLQHIDPQSTDIIDHGAKPRRQLLDWLMFHVEPEFYFAWQYYSRALKQRNTLLKTRRNLSLADLEPWNKMLSDYGEILHSQRLSIVEQWNVYFQNDLSQLLPDLEIELEYSPGFHTEQGLMQDLLNQHQKDIERRYTEYGPHRADLRLKTPFGHADDVLSRGQKKLLIIALKLSQIAMLHASNKETVVLLDDLTAELDLTAQQRLIERLSQLGSQVFMTTLDHASVKKHLHDLSISYQLFSVESGQVSLAAS.

Position 30 to 37 (30 to 37 (GANGSGKT)) interacts with ATP.

It belongs to the RecF family.

The protein localises to the cytoplasm. The RecF protein is involved in DNA metabolism; it is required for DNA replication and normal SOS inducibility. RecF binds preferentially to single-stranded, linear DNA. It also seems to bind ATP. This Acinetobacter baumannii (strain ATCC 17978 / DSM 105126 / CIP 53.77 / LMG 1025 / NCDC KC755 / 5377) protein is DNA replication and repair protein RecF.